A 380-amino-acid chain; its full sequence is Large ribosomal subunit protein mL38 (380 aa).

The transit peptide at M1 to S26 directs the protein to the mitochondrion. Positions Q101–A122 form a coiled coil.

Belongs to the phosphatidylethanolamine-binding protein family. Mitochondrion-specific ribosomal protein mL38 subfamily. Component of the mitochondrial ribosome large subunit (39S) which comprises a 16S rRNA and about 50 distinct proteins.

It is found in the mitochondrion. This chain is Large ribosomal subunit protein mL38 (MRPL38), found in Bos taurus (Bovine).